Consider the following 252-residue polypeptide: GPI alpha-1,4-mannosyltransferase I, stabilizing subunit (252 aa).

Residues 1-22 form the signal peptide; the sequence is MAASALAWLLLWAAGLVGRLAA. Asn-97 and Asn-209 each carry an N-linked (GlcNAc...) asparagine glycan. The chain crosses the membrane as a helical span at residues 225–245; it reads VCSVTLLITVLCSTLILLAVF.

The protein belongs to the PIGX family. As to quaternary structure, part of the glycosylphosphatidylinositol-mannosyltransferase I complex that is composed of PIGM and PIGX. Interacts with PIGM; PIGX stabilizes PIGM.

Its subcellular location is the endoplasmic reticulum membrane. Its pathway is glycolipid biosynthesis; glycosylphosphatidylinositol-anchor biosynthesis. Stabilizing subunit of the glycosylphosphatidylinositol-mannosyltransferase I complex which catalyzes the transfer of the first mannose, via an alpha-1,4 bond from a dolichol-phosphate-mannose (Dol-P-Man) to the glucosaminyl acyl phosphatidylinositol (GlcN-(acyl)PI) intermediate to generate alpha-D-Man-(1-&gt;4)-alpha-D-GlcN-(1-&gt;6)-(1-radyl,2-acyl-sn-glycero-3-phospho)-2-acyl-inositol and participates in the sixth step of the glycosylphosphatidylinositol-anchor biosynthesis. Probably acts by stabilizing the mannosyltransferase PIGM. The chain is GPI alpha-1,4-mannosyltransferase I, stabilizing subunit from Rattus norvegicus (Rat).